The chain runs to 181 residues: Oligoribonuclease (181 aa).

The Exonuclease domain maps to 8-171 (LIWIDLEMTG…QDIQESIAEL (164 aa)). Tyr-129 is an active-site residue.

This sequence belongs to the oligoribonuclease family.

The protein resides in the cytoplasm. Its function is as follows. 3'-to-5' exoribonuclease specific for small oligoribonucleotides. The chain is Oligoribonuclease from Shewanella oneidensis (strain ATCC 700550 / JCM 31522 / CIP 106686 / LMG 19005 / NCIMB 14063 / MR-1).